The chain runs to 423 residues: CinA-like protein (423 aa).

Belongs to the CinA family.

The polypeptide is CinA-like protein (Desulforapulum autotrophicum (strain ATCC 43914 / DSM 3382 / VKM B-1955 / HRM2) (Desulfobacterium autotrophicum)).